Reading from the N-terminus, the 613-residue chain is Proton myo-inositol cotransporter hmit-1.2 (613 aa).

Residues 1–21 lie on the Cytoplasmic side of the membrane; that stretch reads MVAVEFKVSESGRPRPEKNPK. The chain crosses the membrane as a helical span at residues 22-42; it reads LGFFVYLLGSAAIIGGFLFGY. The Extracellular segment spans residues 43–69; the sequence is DTSVVSAAMLYVPEAPGLKPMGTVWKE. The chain crosses the membrane as a helical span at residues 70-90; it reads VIVSITPGMAAVGAWFSGAGS. Topologically, residues 91-96 are cytoplasmic; the sequence is DRYGRK. The chain crosses the membrane as a helical span at residues 97–117; it reads PIIIGSTLIFVCGAVICAVAW. At 118 to 119 the chain is on the extracellular side; that stretch reads TK. Residues 120–140 form a helical membrane-spanning segment; sequence IVMLIGRIFLGVGIGFASMVV. The Cytoplasmic segment spans residues 141 to 157; the sequence is PVYLGEASPTHVRGTLV. Residues 158–178 form a helical membrane-spanning segment; that stretch reads SAFAMMISFGQVVANIMGGVF. Residues 179 to 189 lie on the Extracellular side of the membrane; the sequence is SYWEPYTIGWR. The helical transmembrane segment at 190–210 threads the bilayer; the sequence is LMFAFAGIPALIQFVCFIFLP. At 211–279 the chain is on the cytoplasmic side; that stretch reads ETPRWLYENG…RILKTPHVLK (69 aa). The helical transmembrane segment at 280–300 threads the bilayer; sequence ACFIGSMLQAFQQLAGINTIL. Residues 301–317 are Extracellular-facing; it reads YYTADIIRSAGIENYHT. Residues 318–338 traverse the membrane as a helical segment; that stretch reads IIWISVILSICNLIGPFAPMF. Over 339-347 the chain is Cytoplasmic; that stretch reads FIEKLGRRK. The chain crosses the membrane as a helical span at residues 348-368; that stretch reads LFLFSCAGVVVSLVLIGVSFL. The Extracellular segment spans residues 369-472; it reads LVGNDSAPNF…QKHHCTTSYT (104 aa). N-linked (GlcNAc...) asparagine glycosylation is found at Asn-372, Asn-451, and Asn-456. Residues 473 to 493 form a helical membrane-spanning segment; the sequence is ILPIVMMGVYLLTFSCGFTSL. Residues 494-515 lie on the Cytoplasmic side of the membrane; the sequence is PWVLNSEFYPMWARSTCVSIST. A helical membrane pass occupies residues 516–536; the sequence is LSNWVFNLIIALTYLSLTHAI. At 537–539 the chain is on the extracellular side; the sequence is TKY. A helical membrane pass occupies residues 540–560; sequence GAFWLYAIFTIIAFIFIYFLV. The Cytoplasmic segment spans residues 561-613; sequence PETTGYSIDEVEMLFMNKRQRNIAMQARQAKLDAASDKDKNSSTSLSTETITM. The tract at residues 594-613 is disordered; that stretch reads AASDKDKNSSTSLSTETITM. Polar residues predominate over residues 602-613; sequence SSTSLSTETITM.

The protein belongs to the major facilitator superfamily. Sugar transporter (TC 2.A.1.1) family. In terms of tissue distribution, expressed in the excretory canal cell and in pairs of amphid and sheath glia.

It is found in the cell membrane. The protein resides in the perikaryon. The catalysed reaction is myo-inositol(out) + H(+)(out) = myo-inositol(in) + H(+)(in). In terms of biological role, h(+)-myo-inositol cotransporter. Probably by promoting the transport of myo-inositol regulates intracellular osmosis in response to hyperosmotic stress. The chain is Proton myo-inositol cotransporter hmit-1.2 from Caenorhabditis elegans.